The sequence spans 1167 residues: mRNA 3'-end-processing protein rna-14 (1167 aa).

The segment at 1-245 is disordered; it reads MSDDYDPTNI…DPTPVTQPAP (245 aa). Acidic residues-rich tracts occupy residues 16 to 26 and 70 to 79; these read EEQEDYGEADG and NTDDVGDDYD. A compositionally biased stretch (low complexity) spans 102 to 111; the sequence is TAPQPAAPVA. Acidic residues predominate over residues 124–137; the sequence is DSDDEDEDGDDDGE. Low complexity-rich tracts occupy residues 138–150 and 159–191; these read PQQQQQQQQQQQP and GSGASSSGGSAPAPASASATAAPQSHSPAPQTA. The segment covering 192–218 has biased composition (polar residues); the sequence is TLTVQDNAGATTFNAPPVPQQVSHQSG. The segment covering 219–245 has biased composition (low complexity); it reads ATTAAVPTTPSSAAPAVDPTPVTQPAP. 6 HAT repeats span residues 277–309, 311–342, 352–387, 401–434, 471–504, and 518–550; these read NDIDGARQVYERFLAIFPQAADIWVEYLDLELS, NNFPQAEGIFAKCLMTTPNVNLWTRYLDYIRR, QARQTVSQAYEFVIDNIGLDKDSGKIWAEYIQFIKF, QKMDQLRKAYQRAICVPISNVNTLWKEYDQFEMG, TNLPRLPPAPGFDGDQEFMEQVEIWKKWIAWEKS, and LYQKRILYVYNQALMALRFWPEMWVDAAQWCFD. A compositionally biased stretch (polar residues) spans 882–893; that stretch reads QQQPQLPMSQRD. Disordered regions lie at residues 882-980 and 1075-1167; these read QQQP…SGAG and AYRE…PPPY. A compositionally biased stretch (low complexity) spans 908–922; sequence SPSAGPGAPFAPYAA. Over residues 924-946 the composition is skewed to basic and acidic residues; that stretch reads RPLDDRDYDDHPRKIARSEHDPF. Over residues 969–979 the composition is skewed to gly residues; the sequence is GAAGAYSGSGA. The segment covering 1079–1090 has biased composition (low complexity); the sequence is SPGPLGGRPLSP. Pro residues predominate over residues 1121 to 1134; that stretch reads EPPPAAQYGVPPPA. The segment covering 1135–1151 has biased composition (low complexity); it reads QYDGGWAQQQQQQQYGQ.

Its subcellular location is the nucleus. The protein resides in the cytoplasm. Component of the cleavage factor IA (CFIA) complex, which is involved in the endonucleolytic cleavage during polyadenylation-dependent pre-mRNA 3'-end formation. This is mRNA 3'-end-processing protein rna-14 (rna-14) from Neurospora crassa (strain ATCC 24698 / 74-OR23-1A / CBS 708.71 / DSM 1257 / FGSC 987).